The chain runs to 124 residues: U-scoloptoxin-Er5d (124 aa).

A signal peptide spans 1–22; the sequence is MKTNCEFPLLCLLIVLVANVEG. A propeptide spanning residues 23–94 is cleaved from the precursor; it reads EVEDNELKMV…KRLWRNWERR (72 aa). RLWRNWE repeat units follow at residues 34 to 40, 61 to 67, and 86 to 92; these read RLWRNWE. Pyrrolidone carboxylic acid is present on Q95. An RLWRNWE 4; approximate repeat occupies 107 to 113; the sequence is ELWRNWE. A propeptide spanning residues 112-124 is cleaved from the precursor; that stretch reads WEDLKRRQVGRFE.

Belongs to the scoloptoxin-08 family. In terms of tissue distribution, expressed by the venom gland.

It localises to the secreted. The protein is U-scoloptoxin-Er5d of Ethmostigmus rubripes (Giant centipede).